The primary structure comprises 239 residues: Pyridoxine 5'-phosphate synthase (239 aa).

N7 provides a ligand contact to 3-amino-2-oxopropyl phosphate. Position 9-10 (D9–H10) interacts with 1-deoxy-D-xylulose 5-phosphate. R18 contacts 3-amino-2-oxopropyl phosphate. The active-site Proton acceptor is H43. Residues R45 and H50 each coordinate 1-deoxy-D-xylulose 5-phosphate. The Proton acceptor role is filled by E70. T100 serves as a coordination point for 1-deoxy-D-xylulose 5-phosphate. H191 serves as the catalytic Proton donor. Residues G192 and G213–H214 contribute to the 3-amino-2-oxopropyl phosphate site.

It belongs to the PNP synthase family. Homooctamer; tetramer of dimers.

The protein localises to the cytoplasm. The enzyme catalyses 3-amino-2-oxopropyl phosphate + 1-deoxy-D-xylulose 5-phosphate = pyridoxine 5'-phosphate + phosphate + 2 H2O + H(+). The protein operates within cofactor biosynthesis; pyridoxine 5'-phosphate biosynthesis; pyridoxine 5'-phosphate from D-erythrose 4-phosphate: step 5/5. Its function is as follows. Catalyzes the complicated ring closure reaction between the two acyclic compounds 1-deoxy-D-xylulose-5-phosphate (DXP) and 3-amino-2-oxopropyl phosphate (1-amino-acetone-3-phosphate or AAP) to form pyridoxine 5'-phosphate (PNP) and inorganic phosphate. The sequence is that of Pyridoxine 5'-phosphate synthase from Gloeobacter violaceus (strain ATCC 29082 / PCC 7421).